Reading from the N-terminus, the 689-residue chain is Elongation factor G (689 aa).

The region spanning 8–283 is the tr-type G domain; it reads SKCRNIGIMA…AVVDFLPAPN (276 aa). GTP is bound by residues 17-24, 81-85, and 135-138; these read AHIDAGKT, DTPGH, and NKMD.

It belongs to the TRAFAC class translation factor GTPase superfamily. Classic translation factor GTPase family. EF-G/EF-2 subfamily.

The protein resides in the cytoplasm. In terms of biological role, catalyzes the GTP-dependent ribosomal translocation step during translation elongation. During this step, the ribosome changes from the pre-translocational (PRE) to the post-translocational (POST) state as the newly formed A-site-bound peptidyl-tRNA and P-site-bound deacylated tRNA move to the P and E sites, respectively. Catalyzes the coordinated movement of the two tRNA molecules, the mRNA and conformational changes in the ribosome. The chain is Elongation factor G from Ehrlichia ruminantium (strain Welgevonden).